The following is a 113-amino-acid chain: Ribonuclease P protein component (113 aa).

The protein belongs to the RnpA family. In terms of assembly, consists of a catalytic RNA component (M1 or rnpB) and a protein subunit.

It catalyses the reaction Endonucleolytic cleavage of RNA, removing 5'-extranucleotides from tRNA precursor.. RNaseP catalyzes the removal of the 5'-leader sequence from pre-tRNA to produce the mature 5'-terminus. It can also cleave other RNA substrates such as 4.5S RNA. The protein component plays an auxiliary but essential role in vivo by binding to the 5'-leader sequence and broadening the substrate specificity of the ribozyme. This chain is Ribonuclease P protein component, found in Clavibacter michiganensis subsp. michiganensis (strain NCPPB 382).